The primary structure comprises 460 residues: Argininosuccinate lyase (460 aa).

Belongs to the lyase 1 family. Argininosuccinate lyase subfamily.

The protein localises to the cytoplasm. The catalysed reaction is 2-(N(omega)-L-arginino)succinate = fumarate + L-arginine. It participates in amino-acid biosynthesis; L-arginine biosynthesis; L-arginine from L-ornithine and carbamoyl phosphate: step 3/3. In Alkaliphilus metalliredigens (strain QYMF), this protein is Argininosuccinate lyase.